Consider the following 695-residue polypeptide: Biosynthetic arginine decarboxylase 1 (695 aa).

N6-(pyridoxal phosphate)lysine is present on Lys141. 332-342 (LDVGGGLGVDY) contacts substrate.

The protein belongs to the Orn/Lys/Arg decarboxylase class-II family. SpeA subfamily. Mg(2+) serves as cofactor. The cofactor is pyridoxal 5'-phosphate.

It catalyses the reaction L-arginine + H(+) = agmatine + CO2. Catalyzes the biosynthesis of agmatine from arginine. The protein is Biosynthetic arginine decarboxylase 1 (speA1) of Synechocystis sp. (strain ATCC 27184 / PCC 6803 / Kazusa).